The primary structure comprises 543 residues: CTP synthase (543 aa).

Positions 1-265 are amidoligase domain; it reads MARYIFITGG…DDEVLAAFAI (265 aa). S13 serves as a coordination point for CTP. S13 is a UTP binding site. 14–19 is a binding site for ATP; the sequence is SLGKGL. Y54 provides a ligand contact to L-glutamine. D71 provides a ligand contact to ATP. Positions 71 and 139 each coordinate Mg(2+). CTP is bound by residues 146–148, 186–191, and K222; these read DIE and KTKPTQ. UTP contacts are provided by residues 186–191 and K222; that span reads KTKPTQ. Residue 238–240 coordinates ATP; the sequence is RDA. Residues 291-542 enclose the Glutamine amidotransferase type-1 domain; sequence TIAIVGKYTG…VQAALVQSRL (252 aa). G353 is a binding site for L-glutamine. Residue C380 is the Nucleophile; for glutamine hydrolysis of the active site. Residues 381 to 384, E404, and R470 each bind L-glutamine; that span reads FGMQ. Catalysis depends on residues H515 and E517.

It belongs to the CTP synthase family. In terms of assembly, homotetramer.

It carries out the reaction UTP + L-glutamine + ATP + H2O = CTP + L-glutamate + ADP + phosphate + 2 H(+). It catalyses the reaction L-glutamine + H2O = L-glutamate + NH4(+). The catalysed reaction is UTP + NH4(+) + ATP = CTP + ADP + phosphate + 2 H(+). It participates in pyrimidine metabolism; CTP biosynthesis via de novo pathway; CTP from UDP: step 2/2. With respect to regulation, allosterically activated by GTP, when glutamine is the substrate; GTP has no effect on the reaction when ammonia is the substrate. The allosteric effector GTP functions by stabilizing the protein conformation that binds the tetrahedral intermediate(s) formed during glutamine hydrolysis. Inhibited by the product CTP, via allosteric rather than competitive inhibition. Its function is as follows. Catalyzes the ATP-dependent amination of UTP to CTP with either L-glutamine or ammonia as the source of nitrogen. Regulates intracellular CTP levels through interactions with the four ribonucleotide triphosphates. This Rhodopseudomonas palustris (strain ATCC BAA-98 / CGA009) protein is CTP synthase.